Reading from the N-terminus, the 1148-residue chain is Autophagy-related protein 11 (1148 aa).

Positions 567 to 570 (FDDI) match the AIM (Atg8-family-interacting motif) motif. Over residues 699–710 (KAEASSDVEGNK) the composition is skewed to basic and acidic residues. Disordered stretches follow at residues 699-727 (KAEA…CVSN), 754-777 (PLDS…EAGE), and 784-803 (NSST…ATGR). 2 stretches are compositionally biased toward polar residues: residues 754-767 (PLDS…QNNE) and 784-793 (NSSTAESPQK). Coiled-coil stretches lie at residues 816-868 (ELRN…HLEN) and 956-996 (DKVS…VKTL). T851 carries the post-translational modification Phosphothreonine. Positions 1130 to 1133 (YFIV) match the AIM (Atg8-family-interacting motif) motif.

The protein belongs to the ATG11 family. Homodimer. Interacts with ATG8E, ATG13A and ATG101. Binds to ATG8E on autophagic vesicles.

It is found in the cytoplasmic vesicle. Its subcellular location is the autophagosome. Functionally, accessory protein involved in autophagy. Acts as a scaffold protein of the ATG1-ATG13 complex for faithful delivery of autophagic vesicles to the vacuole. Involved in the stress-induced phosphorylation of ATG1A for turnover of ATG1-ATG13 complex and proper ATG1-ATG13 complex assembly or activity. Required for selective mitophagy. Required for senescence-induced breakdown of mitochondria-resident proteins and mitochondrial vesicles. Seems not essential for ATG8-mediated autophagy. This is Autophagy-related protein 11 from Arabidopsis thaliana (Mouse-ear cress).